A 1135-amino-acid chain; its full sequence is Ubiquitin carboxyl-terminal hydrolase 7 (1135 aa).

In terms of domain architecture, MATH spans 31 to 172 (EGHLSLDIDC…NDTIKLRCRF (142 aa)). In terms of domain architecture, USP spans 193 to 503 (IGLRNQGATC…SAYMLVYVRD (311 aa)). Residue Cys202 is the Nucleophile of the active site. The active-site Proton acceptor is the His442.

The protein belongs to the peptidase C19 family.

The protein resides in the nucleus. The catalysed reaction is Thiol-dependent hydrolysis of ester, thioester, amide, peptide and isopeptide bonds formed by the C-terminal Gly of ubiquitin (a 76-residue protein attached to proteins as an intracellular targeting signal).. Functionally, hydrolase that deubiquitinates target proteins. May play a role in regulating the levels of endogenous siRNA biogenesis. This chain is Ubiquitin carboxyl-terminal hydrolase 7, found in Caenorhabditis elegans.